We begin with the raw amino-acid sequence, 134 residues long: MKSLFYLKLLLWVVLLSLCLLMAHRKTKVADKFRALRSRIQLRFNRHIRLNDSFADDLENGLHSRNFDIISENSNDVRGGLDDVSKNEIKQIMENDNVDFDKARLLYMERKFGQNGIAPDGTPIDPKAFTFDSR.

A signal peptide spans 1-23; sequence MKSLFYLKLLLWVVLLSLCLLMA. Ser-71 and Ser-74 each carry phosphoserine. Residue Lys-86 forms a Glycyl lysine isopeptide (Lys-Gly) (interchain with G-Cter in ubiquitin) linkage.

It belongs to the UPF0357 family.

This is UPF0357 protein YCL012C from Saccharomyces cerevisiae (strain ATCC 204508 / S288c) (Baker's yeast).